Reading from the N-terminus, the 276-residue chain is Pantothenate synthetase (276 aa).

Methionine 27–histidine 34 contributes to the ATP binding site. Histidine 34 functions as the Proton donor in the catalytic mechanism. Glutamine 58 contacts (R)-pantoate. Position 58 (glutamine 58) interacts with beta-alanine. An ATP-binding site is contributed by glycine 147 to aspartate 150. Glutamine 153 lines the (R)-pantoate pocket. ATP-binding positions include valine 176 and leucine 184 to arginine 187.

Belongs to the pantothenate synthetase family. As to quaternary structure, homodimer.

The protein resides in the cytoplasm. The enzyme catalyses (R)-pantoate + beta-alanine + ATP = (R)-pantothenate + AMP + diphosphate + H(+). Its pathway is cofactor biosynthesis; (R)-pantothenate biosynthesis; (R)-pantothenate from (R)-pantoate and beta-alanine: step 1/1. In terms of biological role, catalyzes the condensation of pantoate with beta-alanine in an ATP-dependent reaction via a pantoyl-adenylate intermediate. This chain is Pantothenate synthetase, found in Helicobacter pylori (strain J99 / ATCC 700824) (Campylobacter pylori J99).